Here is a 468-residue protein sequence, read N- to C-terminus: Trehalose-2-sulfate acyltransferase PapA2 (468 aa).

It belongs to the PapA acyltransferase family.

It catalyses the reaction 2-O-sulfo-alpha,alpha-trehalose + hexadecanoyl-CoA = 2-O-sulfo-2'-O-hexadecanoyl-alpha,alpha-trehalose + CoA. Functionally, required for the biosynthesis of sulfolipid-1 (SL-1), a major mycobacterial cell wall lipid. Catalyzes the acylation of trehalose-2-sulfate by adding the palmitoyl group at the 2'-position to yield the intermediate trehalose-2-sulfate-2'-palmitate (SL659). The protein is Trehalose-2-sulfate acyltransferase PapA2 (papA2) of Mycobacterium bovis (strain ATCC BAA-935 / AF2122/97).